The primary structure comprises 521 residues: Bifunctional purine biosynthesis protein PurH (521 aa).

The MGS-like domain maps to 1 to 147 (MAVIKRALIS…KNNRDVTVVV (147 aa)).

Belongs to the PurH family.

It catalyses the reaction (6R)-10-formyltetrahydrofolate + 5-amino-1-(5-phospho-beta-D-ribosyl)imidazole-4-carboxamide = 5-formamido-1-(5-phospho-D-ribosyl)imidazole-4-carboxamide + (6S)-5,6,7,8-tetrahydrofolate. It carries out the reaction IMP + H2O = 5-formamido-1-(5-phospho-D-ribosyl)imidazole-4-carboxamide. Its pathway is purine metabolism; IMP biosynthesis via de novo pathway; 5-formamido-1-(5-phospho-D-ribosyl)imidazole-4-carboxamide from 5-amino-1-(5-phospho-D-ribosyl)imidazole-4-carboxamide (10-formyl THF route): step 1/1. It participates in purine metabolism; IMP biosynthesis via de novo pathway; IMP from 5-formamido-1-(5-phospho-D-ribosyl)imidazole-4-carboxamide: step 1/1. The chain is Bifunctional purine biosynthesis protein PurH from Syntrophotalea carbinolica (strain DSM 2380 / NBRC 103641 / GraBd1) (Pelobacter carbinolicus).